A 458-amino-acid chain; its full sequence is ATP synthase subunit beta (458 aa).

ATP is bound at residue 148–155; that stretch reads GGAGVGKT.

Belongs to the ATPase alpha/beta chains family. F-type ATPases have 2 components, CF(1) - the catalytic core - and CF(0) - the membrane proton channel. CF(1) has five subunits: alpha(3), beta(3), gamma(1), delta(1), epsilon(1). CF(0) has three main subunits: a(1), b(2) and c(9-12). The alpha and beta chains form an alternating ring which encloses part of the gamma chain. CF(1) is attached to CF(0) by a central stalk formed by the gamma and epsilon chains, while a peripheral stalk is formed by the delta and b chains.

It is found in the cell inner membrane. It catalyses the reaction ATP + H2O + 4 H(+)(in) = ADP + phosphate + 5 H(+)(out). Its function is as follows. Produces ATP from ADP in the presence of a proton gradient across the membrane. The catalytic sites are hosted primarily by the beta subunits. This is ATP synthase subunit beta from Pseudomonas fluorescens (strain ATCC BAA-477 / NRRL B-23932 / Pf-5).